Consider the following 394-residue polypeptide: Chaperone protein DnaJ (394 aa).

In terms of domain architecture, J spans 4–68 (DYYEILGVSR…ELRARYDRFG (65 aa)). A CR-type zinc finger spans residues 136 to 218 (GGEKQIRISH…CNGEGLAQTT (83 aa)). The Zn(2+) site is built by cysteine 149, cysteine 152, cysteine 166, cysteine 169, cysteine 192, cysteine 195, cysteine 206, and cysteine 209. CXXCXGXG motif repeat units follow at residues 149–156 (CPVCGGSG), 166–173 (CPTCGGAG), 192–199 (CPTCGGAG), and 206–213 (CYNCNGEG).

This sequence belongs to the DnaJ family. As to quaternary structure, homodimer. Zn(2+) is required as a cofactor.

Its subcellular location is the cytoplasm. In terms of biological role, participates actively in the response to hyperosmotic and heat shock by preventing the aggregation of stress-denatured proteins and by disaggregating proteins, also in an autonomous, DnaK-independent fashion. Unfolded proteins bind initially to DnaJ; upon interaction with the DnaJ-bound protein, DnaK hydrolyzes its bound ATP, resulting in the formation of a stable complex. GrpE releases ADP from DnaK; ATP binding to DnaK triggers the release of the substrate protein, thus completing the reaction cycle. Several rounds of ATP-dependent interactions between DnaJ, DnaK and GrpE are required for fully efficient folding. Also involved, together with DnaK and GrpE, in the DNA replication of plasmids through activation of initiation proteins. The protein is Chaperone protein DnaJ of Synechococcus sp. (strain JA-3-3Ab) (Cyanobacteria bacterium Yellowstone A-Prime).